The following is a 322-amino-acid chain: Replication factor C small subunit (322 aa).

An ATP-binding site is contributed by 46 to 53 (GSAGVGKT).

Belongs to the activator 1 small subunits family. RfcS subfamily. Heteromultimer composed of small subunits (RfcS) and large subunits (RfcL).

Part of the RFC clamp loader complex which loads the PCNA sliding clamp onto DNA. The polypeptide is Replication factor C small subunit (Methanoregula boonei (strain DSM 21154 / JCM 14090 / 6A8)).